An 838-amino-acid polypeptide reads, in one-letter code: Ras-interacting protein RIP3 (838 aa).

Disordered stretches follow at residues 66-97 (VSTS…QQQA), 157-290 (KPTT…TSPK), and 305-336 (NSKT…QQQA). Low complexity-rich tracts occupy residues 67–97 (STSN…QQQA), 157–241 (KPTT…QQKP), and 248–284 (PQNI…QQQQ). Residues 310–321 (QKSDKTSEKENK) are compositionally biased toward basic and acidic residues. The CRIM domain occupies 441–515 (QLKVRVIEKA…KDEVLVLCPN (75 aa)). Disordered regions lie at residues 522–581 (KSSS…QQTQ) and 594–646 (QQQQ…GPDA). Low complexity-rich tracts occupy residues 537–556 (NNNN…SNNN), 563–581 (QPQQ…QQTQ), and 594–620 (QQQQ…QPDQ). Gly residues predominate over residues 621 to 631 (VGGGGGGGGGN). Residues 648-717 (LVVKITLPDS…GGADLILVSR (70 aa)) form the RBD domain.

This sequence belongs to the SIN1 family. In terms of assembly, interacts with activated RasG. Part of a complex, TORC2, consisting of tor, lst8, piaA and ripA. Additional proteins, such as 14-3-3 and heat-shock proteins, may also belong to the TORC2 complex.

In terms of biological role, component of a Ras-regulated pathway involved in integrating chemotaxis and signal relay pathways that are essential for aggregation. This is Ras-interacting protein RIP3 (ripA) from Dictyostelium discoideum (Social amoeba).